The primary structure comprises 81 residues: MKQGIHPDFQKVVFMDSATGAKFVAGSTMKPEETIEYEGETYPLVRVEVSSDSHPFYTGKQKFAQADGRIEKFNKKYGLKK.

The protein belongs to the bacterial ribosomal protein bL31 family. Type B subfamily. In terms of assembly, part of the 50S ribosomal subunit.

The sequence is that of Large ribosomal subunit protein bL31B from Lactobacillus acidophilus (strain ATCC 700396 / NCK56 / N2 / NCFM).